A 110-amino-acid polypeptide reads, in one-letter code: PHD finger-like domain-containing protein 5A (110 aa).

Position 2 is an N-acetylalanine (alanine 2). An N6-acetyllysine modification is found at lysine 3. The Zn(2+) site is built by cysteine 11, cysteine 23, cysteine 26, cysteine 30, cysteine 33, cysteine 46, cysteine 49, cysteine 58, cysteine 61, cysteine 72, and cysteine 75. Positions 35 to 51 (SYVRPCTLVRICDECNY) are interaction with SF3B1 and SF3B3. Residues 79-82 (EKDR) are interaction with SF3B3. A Zn(2+)-binding site is contributed by cysteine 85. Position 94 is a phosphoserine (serine 94).

It belongs to the PHF5 family. In terms of assembly, component of the 17S U2 SnRNP complex, a ribonucleoprotein complex that contains small nuclear RNA (snRNA) U2 and a number of specific proteins. Part of the SF3B subcomplex of the 17S U2 SnRNP complex. SF3B associates with the splicing subcomplex SF3A and a 12S RNA unit to form the U2 small nuclear ribonucleoproteins complex (U2 snRNP). Within the SF3B complex interacts directly with SF3B1 and SF3B3. Component of the minor spliceosome, which splices U12-type introns. Within this complex, interacts with CRIPT. Interacts (via N-terminus) with U2AF1 and SRSF5; acts to bridge the two. Interacts (via C-terminus) with EP400 and DDX1; acts to bridge the two. Interacts with the PAF1 complex (PAF1C) composed of CDC73, PAF1, LEO1, CTR9, RTF1 and SKIC8. Within the PAF1C interacts directly with CDC73 and SKIC8. Interacts with RNA polymerase II. As to expression, expressed in primary spermatocytes (at protein level). Ubiquitously expressed in pre- and postnatal tissues. Highly expressed in pluripotent embryonic stem cells (ESCs) (at protein level) and induced pluripotent stem cells (iPSCs).

The protein localises to the nucleus. It localises to the nucleus speckle. Its function is as follows. Component of the 17S U2 SnRNP complex of the spliceosome, a large ribonucleoprotein complex that removes introns from transcribed pre-mRNAs. The 17S U2 SnRNP complex (1) directly participates in early spliceosome assembly and (2) mediates recognition of the intron branch site during pre-mRNA splicing by promoting the selection of the pre-mRNA branch-site adenosine, the nucleophile for the first step of splicing. Within the 17S U2 SnRNP complex, PHF5A is part of the SF3B subcomplex, which is required for 'A' complex assembly formed by the stable binding of U2 snRNP to the branchpoint sequence in pre-mRNA. Sequence independent binding of SF3A and SF3B subcomplexes upstream of the branch site is essential, it may anchor U2 snRNP to the pre-mRNA. Also acts as a component of the minor spliceosome, which is involved in the splicing of U12-type introns in pre-mRNAs. Also involved in elongation by RNA polymerase II as part of the PAF1 complex (PAF1C). PAF1C is required for maintenance of embryonic stem cell (ESC) self-renewal and cellular reprogramming of stem cells. Maintains pluripotency by recruiting and stabilizing PAF1C on pluripotency genes loci, and by regulating the expression of the pluripotency genes. Regulates the deposition of elongation-associated histone modifications, including dimethylated histone H3 'Lys-79' (H3K79me2) and trimethylated histone H3 'Lys-36' (H3K36me3), on PAF1C targets, self-renewal and pluripotency genes. Regulates RNA polymerase II promoter-proximal pause release of the PAF1C targets and self-renewal genes, and the levels of elongating ('Ser-2' phosphorylated) RNA polymerase II in their gene bodies. Regulates muscle specification in adult stem cells by stabilizing PAF1C in chromatin to promote myogenic differentiation. Acts as a transcriptional regulator by binding to the GJA1/Cx43 promoter and enhancing its up-regulation by ESR1/ER-alpha. The protein is PHD finger-like domain-containing protein 5A (Phf5a) of Mus musculus (Mouse).